Consider the following 313-residue polypeptide: Putative S-adenosyl-L-methionine-dependent methyltransferase MAV_5149 (313 aa).

S-adenosyl-L-methionine contacts are provided by residues aspartate 135 and 164–165; that span reads DL.

It belongs to the UPF0677 family.

Functionally, exhibits S-adenosyl-L-methionine-dependent methyltransferase activity. The polypeptide is Putative S-adenosyl-L-methionine-dependent methyltransferase MAV_5149 (Mycobacterium avium (strain 104)).